We begin with the raw amino-acid sequence, 491 residues long: tRNA-2-methylthio-N(6)-dimethylallyladenosine synthase (491 aa).

The 119-residue stretch at 54-172 (KTYHIKTFGC…ILNLLEQVIF (119 aa)) folds into the MTTase N-terminal domain. The [4Fe-4S] cluster site is built by C63, C99, C133, C209, C213, and C216. Residues 195-426 (RTNNLKGFVN…NEMVKTFSKK (232 aa)) form the Radical SAM core domain. One can recognise a TRAM domain in the interval 429–491 (EKYVNKVLDV…RFTLNGKMID (63 aa)).

It belongs to the methylthiotransferase family. MiaB subfamily. As to quaternary structure, monomer. [4Fe-4S] cluster is required as a cofactor.

The protein localises to the cytoplasm. The enzyme catalyses N(6)-dimethylallyladenosine(37) in tRNA + (sulfur carrier)-SH + AH2 + 2 S-adenosyl-L-methionine = 2-methylsulfanyl-N(6)-dimethylallyladenosine(37) in tRNA + (sulfur carrier)-H + 5'-deoxyadenosine + L-methionine + A + S-adenosyl-L-homocysteine + 2 H(+). Its function is as follows. Catalyzes the methylthiolation of N6-(dimethylallyl)adenosine (i(6)A), leading to the formation of 2-methylthio-N6-(dimethylallyl)adenosine (ms(2)i(6)A) at position 37 in tRNAs that read codons beginning with uridine. In Malacoplasma penetrans (strain HF-2) (Mycoplasma penetrans), this protein is tRNA-2-methylthio-N(6)-dimethylallyladenosine synthase.